A 134-amino-acid polypeptide reads, in one-letter code: Viral interleukin-8 homolog (134 aa).

Residues 1-22 (MQALLLVLVLFIVQIYLLPGNG) form the signal peptide.

It belongs to the intercrine alpha (chemokine CxC) family. In terms of assembly, homodimer.

It is found in the secreted. Its function is as follows. Plays a role in the early phase of cytolytic infections presumably by recruiting host B or T-lymphocytes. In Gallus gallus (Chicken), this protein is Viral interleukin-8 homolog (MDV078).